We begin with the raw amino-acid sequence, 357 residues long: tRNA-specific 2-thiouridylase MnmA (357 aa).

Residues 6-13 (AMSGGVDS) and leucine 32 each bind ATP. The Nucleophile role is filled by cysteine 101. Residues cysteine 101 and cysteine 193 are joined by a disulfide bond. Glycine 125 contacts ATP. The interval 143–145 (KDQ) is interaction with tRNA. The active-site Cysteine persulfide intermediate is cysteine 193.

It belongs to the MnmA/TRMU family.

It localises to the cytoplasm. The enzyme catalyses S-sulfanyl-L-cysteinyl-[protein] + uridine(34) in tRNA + AH2 + ATP = 2-thiouridine(34) in tRNA + L-cysteinyl-[protein] + A + AMP + diphosphate + H(+). Catalyzes the 2-thiolation of uridine at the wobble position (U34) of tRNA, leading to the formation of s(2)U34. This chain is tRNA-specific 2-thiouridylase MnmA, found in Mycolicibacterium vanbaalenii (strain DSM 7251 / JCM 13017 / BCRC 16820 / KCTC 9966 / NRRL B-24157 / PYR-1) (Mycobacterium vanbaalenii).